A 1488-amino-acid polypeptide reads, in one-letter code: Eukaryotic translation initiation factor 4G (1488 aa).

3 disordered regions span residues 196–320, 337–367, and 415–707; these read VQHR…GQTS, DSEK…GKSE, and THQI…MTEA. 2 stretches are compositionally biased toward basic and acidic residues: residues 216 to 244 and 274 to 299; these read VSEK…EKHP and ADEK…RNDT. 4 stretches are compositionally biased toward polar residues: residues 300 to 310, 345 to 360, 448 to 464, and 473 to 495; these read KNLPQQPQSAS, SKVS…SSIS, SLAT…SFVT, and CTTS…TQTL. Residues 496–520 show a composition bias toward low complexity; that stretch reads SASVDASDVSEVNSGTSSESTSQST. A compositionally biased stretch (basic and acidic residues) spans 555–566; sequence QVKHADGAKDES. Residues 627 to 646 show a composition bias toward polar residues; it reads QEQSESVATSDGADSSSTVD. The segment covering 651-671 has biased composition (basic and acidic residues); the sequence is LPEESEREVMCEDDGKKKVEP. Positions 683 to 696 are enriched in polar residues; the sequence is PKLQSSDSGNQASA. Positions 709-721 are EIF4E-binding; sequence GRKKYSRDFLLTF. The span at 753–784 shows a compositional bias: basic and acidic residues; the sequence is DREPHPSSARGSDRPTSRGDRRGPAMDDDKWL. Disordered stretches follow at residues 753 to 795, 974 to 1000, and 1107 to 1299; these read DREP…PNRD, RGER…EREE, and WQQR…SEEE. Residues 883–1106 enclose the MIF4G domain; sequence QRQLKAILNK…RDSIDLRKNK (224 aa). Residues 978 to 989 are compositionally biased toward acidic residues; the sequence is EEAEADKTEEEG. Basic and acidic residues-rich tracts occupy residues 990-1000, 1111-1132, 1181-1191, and 1254-1267; these read EIKQTKEEREE, RKVD…ERHA, IRYEQERHQFD, and TRED…DRFS. A compositionally biased stretch (polar residues) spans 1273–1294; it reads AAQSASSSHRPASQEGRSGNKS. Residues 1299–1423 enclose the MI domain; it reads ELREKSIATI…VLQDVGKLIE (125 aa).

The protein belongs to the eukaryotic initiation factor 4G family. In terms of assembly, EIF4F is a multi-subunit complex, the composition of which varies with external and internal environmental conditions. It is composed of at least EIF4A, EIF4E and EIF4G. In higher plants two isoforms of EIF4F have been identified, named isoform EIF4F and isoform EIF(iso)4F. Isoform EIF4F has subunits p220 and p26, whereas isoform EIF(iso)4F has subunits p82 and p28.

In terms of biological role, component of the protein complex eIF4F, which is involved in the recognition of the mRNA cap, ATP-dependent unwinding of 5'-terminal secondary structure and recruitment of mRNA to the ribosome. This is Eukaryotic translation initiation factor 4G from Triticum aestivum (Wheat).